Here is a 143-residue protein sequence, read N- to C-terminus: Acyl carrier protein 3, chloroplastic (143 aa).

Residues 1-60 (MATAAAGSSLICIKSASCSLNRAQVPSGLSSLRSVSLPISGKIFPSLRSSRGPLSFRVCC) constitute a chloroplast transit peptide. The Carrier domain maps to 64 to 139 (QETVTRVCEI…DAADLIEKLV (76 aa)). Position 99 is an O-(pantetheine 4'-phosphoryl)serine (serine 99).

It belongs to the acyl carrier protein (ACP) family. 4'-phosphopantetheine is transferred from CoA to a specific serine of apo-ACP by acpS. This modification is essential for activity because fatty acids are bound in thioester linkage to the sulfhydryl of the prosthetic group.

The protein localises to the plastid. It is found in the chloroplast. It functions in the pathway lipid metabolism; fatty acid biosynthesis. In terms of biological role, carrier of the growing fatty acid chain in fatty acid biosynthesis. The protein is Acyl carrier protein 3, chloroplastic (ACL1.3) of Cuphea lanceolata (Cigar flower).